Consider the following 445-residue polypeptide: Acyl-lipid (7-3)-desaturase (445 aa).

In terms of domain architecture, Cytochrome b5 heme-binding spans 11–91 (VAELRAAEVA…MSKFFVGSLD (81 aa)). Heme contacts are provided by histidine 50 and histidine 73. 2 helical membrane-spanning segments follow: residues 126–146 (YWLKAAALVVAAVSIEGYMLL) and 148–168 (GKTLLLSVFLGLVFAWIGLNI). A Histidine box-1 motif is present at residues 170–174 (HDANH). The short motif at 205–210 (HVVMHH) is the Histidine box-2 element. Helical transmembrane passes span 247 to 267 (ILPGEAMYAFKLLFLDALELL), 283 to 303 (LFAPAVACKLGFWARFVALPL), and 312 to 332 (ALCICATVCTGSFYLAFFFFI). The short motif at 380–384 (QIEHH) is the Histidine box-3 element.

It belongs to the fatty acid desaturase type 1 family. Requires Fe(2+) as cofactor.

The protein resides in the membrane. The catalysed reaction is a (7Z,10Z,13Z,16Z,19Z)-docosapentaenoyl-containing glycerolipid + 2 Fe(II)-[cytochrome b5] + O2 + 2 H(+) = a (4Z,7Z,10Z,13Z,16Z,19Z)-docosahexaenoyl-containing glycerolipid + 2 Fe(III)-[cytochrome b5] + 2 H2O. It carries out the reaction a (7Z,10Z,13Z,16Z)-docosatetraenoyl-containing glycerolipid + 2 Fe(II)-[cytochrome b5] + O2 + 2 H(+) = a (4Z,7Z,10Z,13Z,16Z)-docosapentaenoyl-containing glycerolipid + 2 Fe(III)-[cytochrome b5] + 2 H2O. In terms of biological role, fatty acid desaturase that introduces a cis double bond at the 4-position in 22-carbon polyunsaturated fatty acids that contain a Delta(7) double bond, resulting in the production of delta-4 desaturated fatty acid docosahexanoic acid (DHA). Mediates desaturation of 22:5n-3 and 22:4n-6 into 22:6n-3 and 22:5n-6 respectively. This is Acyl-lipid (7-3)-desaturase from Diacronema lutheri (Unicellular marine alga).